A 225-amino-acid chain; its full sequence is MANINFGFEHHAKKLYSGAIEQGISNSLVPMVIETSGRGERAFDIFSRLLRERIIFLGTGIDEHVAGLIMAQLIFLESEDPERDIYIYINSPGGSVSAGLGIYDTMQYIRPEISTVCVGMAASMGAFLLASGNKGKRASLPHSRIMIHQPSGGAQGQETDIVIQAREIEKIRRLLEELLAKHTGQPVEKVREDSERDRWMNPQEALEYGLIDAIFEKRPTPEKKD.

S123 serves as the catalytic Nucleophile. The active site involves H148.

Belongs to the peptidase S14 family. Fourteen ClpP subunits assemble into 2 heptameric rings which stack back to back to give a disk-like structure with a central cavity, resembling the structure of eukaryotic proteasomes.

The protein resides in the cytoplasm. It carries out the reaction Hydrolysis of proteins to small peptides in the presence of ATP and magnesium. alpha-casein is the usual test substrate. In the absence of ATP, only oligopeptides shorter than five residues are hydrolyzed (such as succinyl-Leu-Tyr-|-NHMec, and Leu-Tyr-Leu-|-Tyr-Trp, in which cleavage of the -Tyr-|-Leu- and -Tyr-|-Trp bonds also occurs).. Its function is as follows. Cleaves peptides in various proteins in a process that requires ATP hydrolysis. Has a chymotrypsin-like activity. Plays a major role in the degradation of misfolded proteins. This chain is ATP-dependent Clp protease proteolytic subunit, found in Chlorobium chlorochromatii (strain CaD3).